We begin with the raw amino-acid sequence, 206 residues long: Outer-membrane lipoprotein LolB (206 aa).

The N-terminal stretch at 1–18 is a signal peptide; that stretch reads MKTFKFLTALFATAILTA. The N-palmitoyl cysteine moiety is linked to residue C19. C19 is lipidated: S-diacylglycerol cysteine.

The protein belongs to the LolB family. Monomer.

It is found in the cell outer membrane. Its function is as follows. Plays a critical role in the incorporation of lipoproteins in the outer membrane after they are released by the LolA protein. In Haemophilus influenzae (strain PittEE), this protein is Outer-membrane lipoprotein LolB.